Reading from the N-terminus, the 159-residue chain is Ribosome maturation factor RimP (159 aa).

The protein belongs to the RimP family.

The protein resides in the cytoplasm. Its function is as follows. Required for maturation of 30S ribosomal subunits. This chain is Ribosome maturation factor RimP, found in Streptococcus pneumoniae serotype 2 (strain D39 / NCTC 7466).